A 285-amino-acid polypeptide reads, in one-letter code: S-methyl-5'-thioadenosine phosphorylase (285 aa).

Phosphate contacts are provided by residues Ser10, Arg52–His53, and Thr85–Ala86. Met188 contributes to the substrate binding site. Position 189 (Thr189) interacts with phosphate. Asp212 to Asp214 serves as a coordination point for substrate.

This sequence belongs to the PNP/MTAP phosphorylase family. MTAP subfamily. In terms of assembly, homotrimer.

The protein resides in the cytoplasm. It is found in the nucleus. It carries out the reaction S-methyl-5'-thioadenosine + phosphate = 5-(methylsulfanyl)-alpha-D-ribose 1-phosphate + adenine. It functions in the pathway amino-acid biosynthesis; L-methionine biosynthesis via salvage pathway; S-methyl-5-thio-alpha-D-ribose 1-phosphate from S-methyl-5'-thioadenosine (phosphorylase route): step 1/1. Catalyzes the reversible phosphorylation of S-methyl-5'-thioadenosine (MTA) to adenine and 5-methylthioribose-1-phosphate. Involved in the breakdown of MTA, a major by-product of polyamine biosynthesis. Responsible for the first step in the methionine salvage pathway after MTA has been generated from S-adenosylmethionine. Has broad substrate specificity with 6-aminopurine nucleosides as preferred substrates. The protein is S-methyl-5'-thioadenosine phosphorylase of Caenorhabditis briggsae.